Reading from the N-terminus, the 438-residue chain is Coenzyme A disulfide reductase (438 aa).

Position 8–33 (8–33 (GAVAGGATCASQIRRLDKESDIIIFE)) interacts with FAD. Residues Thr15, Gln19, Arg22, Ser39, and Asn42 each coordinate substrate. The active-site Nucleophile is Cys43. Cys43 acts as the Redox-active in catalysis. Lys71 contributes to the substrate binding site. 151–166 (VLVIGAGYVSLEVLEN) contacts NADP(+). 267 to 277 (TNVPNIYAIGD) is an FAD binding site. His299 lines the substrate pocket. Residue Tyr419 coordinates FAD. A substrate-binding site is contributed by Lys427.

Belongs to the class-III pyridine nucleotide-disulfide oxidoreductase family. As to quaternary structure, homodimer. It depends on FAD as a cofactor.

The catalysed reaction is NADP(+) + 2 CoA = CoA-disulfide + NADPH + H(+). Functionally, catalyzes specifically the NADPH-dependent reduction of coenzyme A disulfide. The sequence is that of Coenzyme A disulfide reductase from Staphylococcus aureus (strain JH1).